The primary structure comprises 367 residues: Palmitoyltransferase ERF2 (367 aa).

The span at 1–23 shows a compositional bias: polar residues; that stretch reads MRLHSRQASNPHRQYSAAQSLHS. The tract at residues 1–32 is disordered; that stretch reads MRLHSRQASNPHRQYSAAQSLHSSSDDSEHKE. The Cytoplasmic portion of the chain corresponds to 1-87; the sequence is MRLHSRQASN…GRLRTVAKTK (87 aa). The chain crosses the membrane as a helical span at residues 88 to 108; the sequence is YLSVLVLVMLIAPIVLFSVFE. The Lumenal segment spans residues 109 to 121; it reads TGYLWKHVAGAKP. The helical transmembrane segment at 122-142 threads the bilayer; that stretch reads CVVLCYYFWTLCFASFISTGA. The Cytoplasmic segment spans residues 143 to 229; the sequence is TDPGTLPRNI…NCIGQRNHRY (87 aa). Residues 185–235 form the DHHC domain; that stretch reads KYCTTCRIWRPPRASHCAVCDSCILSFDHHCDWLNNCIGQRNHRYFLAFLF. Residue Cys-215 is the S-palmitoyl cysteine intermediate of the active site. Residues 230 to 250 form a helical membrane-spanning segment; sequence FLAFLFSSVLSSIWLLTCCAL. Topologically, residues 251 to 262 are lumenal; the sequence is KLRHAGSPSAAP. A helical transmembrane segment spans residues 263 to 283; sequence VSLLLICYCAVSIWYPLLLAI. The Cytoplasmic portion of the chain corresponds to 284-367; that stretch reads YHLFLTGTQQ…LPIPHSFEKV (84 aa).

It belongs to the DHHC palmitoyltransferase family. ERF2/ZDHHC9 subfamily. In terms of assembly, interacts with ERF4. Autopalmitoylated.

It is found in the endoplasmic reticulum membrane. The catalysed reaction is L-cysteinyl-[protein] + hexadecanoyl-CoA = S-hexadecanoyl-L-cysteinyl-[protein] + CoA. The ERF2-ERF4 complex is a palmitoyltransferase specific for Ras proteins. The polypeptide is Palmitoyltransferase ERF2 (ERF2) (Eremothecium gossypii (strain ATCC 10895 / CBS 109.51 / FGSC 9923 / NRRL Y-1056) (Yeast)).